Consider the following 168-residue polypeptide: MSVANSRTAVYPGTFDPITNGHIDLVNRAAPLFERVVVGVAYSPSKGPALPLERRVELAQEALAAHANVEVRGFDTLLAHFVRDMGAGVLLRGLRAVSDFEYEFQMASMNRHLIPEVETLFLTPAEQYSFISSSLVREIARLGGDVSGFVPASVVDALRQVRESRAQV.

Thr14 lines the substrate pocket. Residues 14–15 (TF) and His22 each bind ATP. Residues Lys46, Leu78, and Arg92 each contribute to the substrate site. Residues 93–95 (GLR), Glu103, and 128–134 (YSFISSS) each bind ATP.

It belongs to the bacterial CoaD family. As to quaternary structure, homohexamer. It depends on Mg(2+) as a cofactor.

The protein localises to the cytoplasm. The catalysed reaction is (R)-4'-phosphopantetheine + ATP + H(+) = 3'-dephospho-CoA + diphosphate. It functions in the pathway cofactor biosynthesis; coenzyme A biosynthesis; CoA from (R)-pantothenate: step 4/5. Its function is as follows. Reversibly transfers an adenylyl group from ATP to 4'-phosphopantetheine, yielding dephospho-CoA (dPCoA) and pyrophosphate. This is Phosphopantetheine adenylyltransferase from Xanthomonas campestris pv. campestris (strain 8004).